A 216-amino-acid chain; its full sequence is uncharacterized protein (216 aa).

A helical transmembrane segment spans residues 39–59 (VLPLTFIGSLLILILTIVYYF). Positions 59-108 (FTLSGSVNELKNEISKEKSKKERLLSEIKRLEELKKTLETKKAIYEVVKI) form a coiled coil.

The protein resides in the membrane. This is an uncharacterized protein from Aquifex aeolicus (strain VF5).